The sequence spans 216 residues: MRTTLQPGLTNRLTKYLRVTQQLIEEGRDAVSSKELGDFTGINPVQVRRDLNAIGFSGTRGVGYQAYDLVEAVRGILGLRQTYNIALVGAGNLGSAIASSTILPKRGFVIHDVFDNDPQKIGRTVGNVVVKHIDELKKSVAEADEVIGIIATPASAAQQVADLMVEANIRVILNYTDVLLHVPPGVTVHRIDPTAQLMHTLYYLTQAETEEAAPAT.

Residues lysine 15 to isoleucine 54 constitute a DNA-binding region (H-T-H motif). Residue glycine 89–glycine 94 coordinates NAD(+).

The protein belongs to the transcriptional regulatory Rex family. Homodimer.

It localises to the cytoplasm. In terms of biological role, modulates transcription in response to changes in cellular NADH/NAD(+) redox state. The chain is Redox-sensing transcriptional repressor Rex from Rubrobacter xylanophilus (strain DSM 9941 / JCM 11954 / NBRC 16129 / PRD-1).